The primary structure comprises 442 residues: Alpha-1,6-mannosyl-glycoprotein 2-beta-N-acetylglucosaminyltransferase (442 aa).

Residues 1–9 are Cytoplasmic-facing; that stretch reads MRFRIYKRK. The helical; Signal-anchor for type II membrane protein transmembrane segment at 10 to 29 threads the bilayer; that stretch reads VLILTLVVAACGFVLWSSNG. Residues 30–442 are Lumenal-facing; it reads RQRKNDALAP…ELCKSYRRLQ (413 aa). Residues asparagine 64 and asparagine 81 are each glycosylated (N-linked (GlcNAc...) asparagine). Substrate-binding positions include 118–122 and aspartate 149; that span reads QVHNR. A disulfide bond links cysteine 191 and cysteine 205. 224 to 228 is a binding site for substrate; it reads QTKHH. Aspartate 256 contacts Mn(2+). A disulfide bridge connects residues cysteine 278 and cysteine 281. Arginine 293 provides a ligand contact to substrate. Intrachain disulfides connect cysteine 329-cysteine 352, cysteine 334-cysteine 435, and cysteine 373-cysteine 381. Position 369 (histidine 369) interacts with Mn(2+).

Belongs to the glycosyltransferase 16 (GT16) protein family. Homodimer. Mn(2+) serves as cofactor. In terms of tissue distribution, detected in liver (at protein level). Detected in liver, brain, thymus and spleen.

The protein resides in the golgi apparatus membrane. The catalysed reaction is an N(4)-{beta-D-GlcNAc-(1-&gt;2)-alpha-D-Man-(1-&gt;3)-[alpha-D-Man-(1-&gt;6)]-beta-D-Man-(1-&gt;4)-beta-D-GlcNAc-(1-&gt;4)-beta-D-GlcNAc}-L-asparaginyl-[protein] + UDP-N-acetyl-alpha-D-glucosamine = N(4)-{beta-D-GlcNAc-(1-&gt;2)-alpha-D-Man-(1-&gt;3)-[beta-D-GlcNAc-(1-&gt;2)-alpha-D-Man-(1-&gt;6)]-beta-D-Man-(1-&gt;4)-beta-D-GlcNAc-(1-&gt;4)-beta-D-GlcNAc}-L-asparaginyl-[protein] + UDP + H(+). Its pathway is protein modification; protein glycosylation. Functionally, plays an essential role in protein N-glycosylation. Catalyzes the transfer of N-acetylglucosamine (GlcNAc) onto the free terminal mannose moiety in the core structure of the nascent N-linked glycan chain, giving rise to the second branch in complex glycans. The sequence is that of Alpha-1,6-mannosyl-glycoprotein 2-beta-N-acetylglucosaminyltransferase (Mgat2) from Rattus norvegicus (Rat).